Reading from the N-terminus, the 181-residue chain is ATP-dependent protease subunit HslV (181 aa).

Residue Thr-7 is part of the active site. The Na(+) site is built by Ala-162, Cys-165, and Thr-168.

This sequence belongs to the peptidase T1B family. HslV subfamily. As to quaternary structure, a double ring-shaped homohexamer of HslV is capped on each side by a ring-shaped HslU homohexamer. The assembly of the HslU/HslV complex is dependent on binding of ATP.

Its subcellular location is the cytoplasm. It carries out the reaction ATP-dependent cleavage of peptide bonds with broad specificity.. Allosterically activated by HslU binding. Its function is as follows. Protease subunit of a proteasome-like degradation complex believed to be a general protein degrading machinery. The protein is ATP-dependent protease subunit HslV of Coxiella burnetii (strain Dugway 5J108-111).